We begin with the raw amino-acid sequence, 354 residues long: Protein RecA (354 aa).

75–82 (GPESSGKT) serves as a coordination point for ATP.

This sequence belongs to the RecA family.

Its subcellular location is the cytoplasm. In terms of biological role, can catalyze the hydrolysis of ATP in the presence of single-stranded DNA, the ATP-dependent uptake of single-stranded DNA by duplex DNA, and the ATP-dependent hybridization of homologous single-stranded DNAs. It interacts with LexA causing its activation and leading to its autocatalytic cleavage. In Cupriavidus taiwanensis (strain DSM 17343 / BCRC 17206 / CCUG 44338 / CIP 107171 / LMG 19424 / R1) (Ralstonia taiwanensis (strain LMG 19424)), this protein is Protein RecA.